Here is a 464-residue protein sequence, read N- to C-terminus: Chromosomal replication initiator protein DnaA (464 aa).

The interval 1–74 (MDAVGYEVFW…ERKFLELSGH (74 aa)) is domain I, interacts with DnaA modulators. The tract at residues 74-117 (HPIKLLFAVKKGTPHGNTAPPKHVHTYLEKNSPAEVPSKKSFHP) is domain II. The interval 118-341 (DLNRDYTFEN…GALTKIIAFI (224 aa)) is domain III, AAA+ region. G162, G164, K165, and T166 together coordinate ATP. The interval 342–464 (EVSGSITIDI…LKSKVQDSIR (123 aa)) is domain IV, binds dsDNA.

Belongs to the DnaA family. In terms of assembly, oligomerizes as a right-handed, spiral filament on DNA at oriC.

The protein localises to the cytoplasm. In terms of biological role, plays an essential role in the initiation and regulation of chromosomal replication. ATP-DnaA binds to the origin of replication (oriC) to initiate formation of the DNA replication initiation complex once per cell cycle. Binds the DnaA box (a 9 base pair repeat at the origin) and separates the double-stranded (ds)DNA. Forms a right-handed helical filament on oriC DNA; dsDNA binds to the exterior of the filament while single-stranded (ss)DNA is stabiized in the filament's interior. The ATP-DnaA-oriC complex binds and stabilizes one strand of the AT-rich DNA unwinding element (DUE), permitting loading of DNA polymerase. After initiation quickly degrades to an ADP-DnaA complex that is not apt for DNA replication. Binds acidic phospholipids. In Treponema pallidum (strain Nichols), this protein is Chromosomal replication initiator protein DnaA.